Reading from the N-terminus, the 801-residue chain is Protocadherin beta-8 (801 aa).

Residues 1–29 form the signal peptide; that stretch reads MEASGKLICRQRQVLFSFLLLGLSLAGAA. At 30–691 the chain is on the extracellular side; that stretch reads EPRSYSVVEE…GQADSLTVYL (662 aa). Cadherin domains are found at residues 36–134, 139–243, 248–348, 353–452, and 457–562; these read VVEE…SPVF, MLVK…APEF, YRVQ…APEV, FTSP…APAF, and YTLF…SPFV. An intrachain disulfide couples Cys-97 to Cys-103. 2 N-linked (GlcNAc...) asparagine glycosylation sites follow: Asn-419 and Asn-437. Residue Asn-568 is glycosylated (N-linked (GlcNAc...) asparagine). Residues 569-672 form the Cadherin 6 domain; it reads GSAPCTELVP…LVDGFSQPYL (104 aa). The chain crosses the membrane as a helical span at residues 692–710; sequence VVALASVSSLFLFSVLLFV. Residues 711–801 lie on the Cytoplasmic side of the membrane; that stretch reads AVLLCRRSRA…NGFGFSLQLK (91 aa).

Forms homodimers in trans (molecules expressed by two different cells). Forms promiscuous heterodimers in cis (at the plasma membrane of the same cell) with other protocadherins.

It localises to the cell membrane. Calcium-dependent cell-adhesion protein involved in cells self-recognition and non-self discrimination. Thereby, it is involved in the establishment and maintenance of specific neuronal connections in the brain. This is Protocadherin beta-8 from Homo sapiens (Human).